A 254-amino-acid polypeptide reads, in one-letter code: 5-oxoprolinase subunit A (254 aa).

This sequence belongs to the LamB/PxpA family. As to quaternary structure, forms a complex composed of PxpA, PxpB and PxpC.

The catalysed reaction is 5-oxo-L-proline + ATP + 2 H2O = L-glutamate + ADP + phosphate + H(+). Its function is as follows. Catalyzes the cleavage of 5-oxoproline to form L-glutamate coupled to the hydrolysis of ATP to ADP and inorganic phosphate. This Rhodopseudomonas palustris (strain BisB5) protein is 5-oxoprolinase subunit A.